The following is a 196-amino-acid chain: Penicillin-binding protein activator LpoB (196 aa).

An N-terminal signal peptide occupies residues methionine 1 to glycine 16. Cysteine 17 carries N-palmitoyl cysteine lipidation. Cysteine 17 is lipidated: S-diacylglycerol cysteine. Residues threonine 24–proline 54 are disordered. Over residues valine 34–proline 43 the composition is skewed to pro residues.

This sequence belongs to the LpoB family. In terms of assembly, interacts with PBP1b.

The protein resides in the cell outer membrane. Functionally, regulator of peptidoglycan synthesis that is essential for the function of penicillin-binding protein 1B (PBP1b). In Dickeya dadantii (strain 3937) (Erwinia chrysanthemi (strain 3937)), this protein is Penicillin-binding protein activator LpoB.